A 400-amino-acid polypeptide reads, in one-letter code: Argininosuccinate synthase (400 aa).

Residues 10–18 and A38 contribute to the ATP site; that span reads AYSGGVDTS. Y89 contacts L-citrulline. Residue G119 participates in ATP binding. 3 residues coordinate L-aspartate: T121, N125, and D126. L-citrulline is bound at residue N125. L-citrulline-binding residues include R129, S177, S186, E262, and Y274.

Belongs to the argininosuccinate synthase family. Type 1 subfamily. In terms of assembly, homotetramer.

The protein resides in the cytoplasm. It catalyses the reaction L-citrulline + L-aspartate + ATP = 2-(N(omega)-L-arginino)succinate + AMP + diphosphate + H(+). It participates in amino-acid biosynthesis; L-arginine biosynthesis; L-arginine from L-ornithine and carbamoyl phosphate: step 2/3. This is Argininosuccinate synthase from Nostoc sp. (strain PCC 7120 / SAG 25.82 / UTEX 2576).